The chain runs to 106 residues: Putative regulatory protein MalR (106 aa).

Residues 12-106 form the HTH hxlR-type domain; it reads CSIEYTLSFM…NLMHKWGQEN (95 aa).

Functionally, potential regulator of the malBH genes. In Fusobacterium mortiferum, this protein is Putative regulatory protein MalR (malR).